We begin with the raw amino-acid sequence, 465 residues long: Neuraminidase (465 aa).

Residues 1–11 (MLPSTIQTLTL) lie on the Intravirion side of the membrane. The chain crosses the membrane as a helical span at residues 12 to 34 (FLTSGGVLLSLYVSASLSYLLYS). Residues 13–35 (LTSGGVLLSLYVSASLSYLLYSD) form an involved in apical transport and lipid raft association region. The Virion surface portion of the chain corresponds to 35 to 465 (DILLRFSSKI…DTVTGVDMAL (431 aa)). The tract at residues 38-85 (LRFSSKITAPTMTLDCANASNVQAVNRSATKEMTFLLPEPEWTYPRLS) is hypervariable stalk region. Residues N55 and N63 are each glycosylated (N-linked (GlcNAc...) asparagine; by host). Disulfide bonds link C86-C419, C121-C126, C181-C228, C230-C235, C276-C290, C278-C288, C317-C336, and C423-C446. A head of neuraminidase region spans residues 88–465 (GSTFQKALLI…DTVTGVDMAL (378 aa)). Residue R115 participates in substrate binding. Residue N143 is glycosylated (N-linked (GlcNAc...) asparagine; by host). Residue D148 is the Proton donor/acceptor of the active site. R149 contributes to the substrate binding site. Substrate is bound at residue 274 to 275 (EE). N283 carries an N-linked (GlcNAc...) asparagine; by host glycan. R291 provides a ligand contact to substrate. D292 and D323 together coordinate Ca(2+). Residues 328–347 (DDGSITGPCESDGDKGRGGI) form a disordered region. Residue R373 coordinates substrate. Residue Y408 is the Nucleophile of the active site.

This sequence belongs to the glycosyl hydrolase 34 family. As to quaternary structure, homotetramer. Requires Ca(2+) as cofactor. In terms of processing, N-glycosylated.

The protein resides in the virion membrane. It localises to the host apical cell membrane. It carries out the reaction Hydrolysis of alpha-(2-&gt;3)-, alpha-(2-&gt;6)-, alpha-(2-&gt;8)- glycosidic linkages of terminal sialic acid residues in oligosaccharides, glycoproteins, glycolipids, colominic acid and synthetic substrates.. Its activity is regulated as follows. Inhibited by the neuraminidase inhibitors zanamivir (Relenza) and oseltamivir (Tamiflu). These drugs interfere with the release of progeny virus from infected cells and are effective against all influenza strains. Resistance to neuraminidase inhibitors is quite rare. Its function is as follows. Catalyzes the removal of terminal sialic acid residues from viral and cellular glycoconjugates. Cleaves off the terminal sialic acids on the glycosylated HA during virus budding to facilitate virus release. Additionally helps virus spread through the circulation by further removing sialic acids from the cell surface. These cleavages prevent self-aggregation and ensure the efficient spread of the progeny virus from cell to cell. Otherwise, infection would be limited to one round of replication. Described as a receptor-destroying enzyme because it cleaves a terminal sialic acid from the cellular receptors. May facilitate viral invasion of the upper airways by cleaving the sialic acid moieties on the mucin of the airway epithelial cells. Likely to plays a role in the budding process through its association with lipid rafts during intracellular transport. May additionally display a raft-association independent effect on budding. Plays a role in the determination of host range restriction on replication and virulence. Sialidase activity in late endosome/lysosome traffic seems to enhance virus replication. In Influenza B virus (strain B/Memphis/3/1989), this protein is Neuraminidase.